Here is a 300-residue protein sequence, read N- to C-terminus: Cytochrome f (300 aa).

A signal peptide spans M1 to A32. Y33, C53, C56, and H57 together coordinate heme. The chain crosses the membrane as a helical span at residues L267–K287.

This sequence belongs to the cytochrome f family. As to quaternary structure, the 4 large subunits of the cytochrome b6-f complex are cytochrome b6, subunit IV (17 kDa polypeptide, petD), cytochrome f and the Rieske protein, while the 4 small subunits are PetG, PetL, PetM and PetN. The complex functions as a dimer. Requires heme as cofactor.

It localises to the plastid. The protein localises to the chloroplast thylakoid membrane. Component of the cytochrome b6-f complex, which mediates electron transfer between photosystem II (PSII) and photosystem I (PSI), cyclic electron flow around PSI, and state transitions. The protein is Cytochrome f of Cyanidioschyzon merolae (strain NIES-3377 / 10D) (Unicellular red alga).